A 394-amino-acid polypeptide reads, in one-letter code: Elongation factor Tu (394 aa).

Residues 10–204 form the tr-type G domain; sequence KPHVNVGTIG…YLDSYIPEPE (195 aa). The G1 stretch occupies residues 19-26; that stretch reads GHVDHGKT. GTP is bound at residue 19 to 26; it reads GHVDHGKT. Position 26 (Thr26) interacts with Mg(2+). The interval 60 to 64 is G2; that stretch reads GITIN. The tract at residues 81-84 is G3; the sequence is DCPG. Residues 81 to 85 and 136 to 139 each bind GTP; these read DCPGH and NKCD. The segment at 136–139 is G4; sequence NKCD. The interval 174-176 is G5; sequence SAL.

Belongs to the TRAFAC class translation factor GTPase superfamily. Classic translation factor GTPase family. EF-Tu/EF-1A subfamily. As to quaternary structure, monomer.

The protein localises to the cytoplasm. The catalysed reaction is GTP + H2O = GDP + phosphate + H(+). Its function is as follows. GTP hydrolase that promotes the GTP-dependent binding of aminoacyl-tRNA to the A-site of ribosomes during protein biosynthesis. In Enterobacter sp. (strain 638), this protein is Elongation factor Tu.